The primary structure comprises 837 residues: Zinc fingers and homeoboxes protein 2 (837 aa).

Residues 27–77 (VDRAKEKGIGTPQPDVAKDSWAAELENSSKENEVIEVKSMGESQSKKLQGG) are interaction with EFNB1. Residue Thr37 is modified to Phosphothreonine. Residue Lys64 forms a Glycyl lysine isopeptide (Lys-Gly) (interchain with G-Cter in SUMO2) linkage. 2 consecutive C2H2-type zinc fingers follow at residues 78–101 (YECKYCPYSTQNLNEFTEHVDMQH) and 110–133 (YVCAECNFTTKKYDSLSDHNSKFH). The segment covering 164–180 (SITTSGPGTGDSDSGIS) has biased composition (low complexity). The segment at 164–204 (SITTSGPGTGDSDSGISVSKTPIMKPGKPKADAKKVPKKPE) is disordered. Basic and acidic residues predominate over residues 192–204 (PKADAKKVPKKPE). Residues 195–358 (DAKKVPKKPE…PAQLAPTKVT (164 aa)) form a required for homodimerization region. Phosphothreonine is present on Thr207. 4 consecutive DNA-binding regions (homeobox) follow at residues 263–324 (NTTK…WSPE), 439–501 (TPAS…IVHI), 530–591 (PQKF…EQAV), and 628–690 (SPSP…TVKW). Positions 263 to 446 (NTTKYNSALD…PLTPASDRKK (184 aa)) are required for repressor activity. A required for interaction with NFYA region spans residues 263–497 (NTTKYNSALD…SDHRYRCQRG (235 aa)). The interval 317–446 (HGISWSPEEV…PLTPASDRKK (130 aa)) is required for nuclear localization. The segment at 404–445 (GQKRPLVTPQAAPEPKRPHIAQVPEPPPKVANPPLTPASDRK) is disordered. Residues 427–439 (PEPPPKVANPPLT) show a composition bias toward pro residues. A Glycyl lysine isopeptide (Lys-Gly) (interchain with G-Cter in SUMO2) cross-link involves residue Lys455. The tract at residues 755-837 (PAKDCLPAKP…DCVPAEAGQA (83 aa)) is disordered. Phosphoserine is present on residues Ser825 and Ser827.

This sequence belongs to the ZHX family. Homodimer (via homeobox domain). Heterodimer with ZHX1 (via homeobox domain 1). Heterodimer with ZHX3 (via homeobox domain 1). Heterodimerization with ZHX1 is not necessary for repressor activity. Interacts (via homeobox domain) with NFYA (via N-terminus). Interacts with EFNB1 intracellular domain peptide; the interaction enhances ZHX2 transcriptional repression activity. Ubiquitously expressed. Expressed in podocytes.

The protein localises to the nucleus. Functionally, acts as a transcriptional repressor. Represses the promoter activity of the CDC25C gene stimulated by NFYA. May play a role in retinal development where it regulates the composition of bipolar cell populations, by promoting differentiation of bipolar OFF-type cells. In the brain, may promote maintenance and suppress differentiation of neural progenitor cells in the developing cortex. This chain is Zinc fingers and homeoboxes protein 2 (ZHX2), found in Homo sapiens (Human).